We begin with the raw amino-acid sequence, 408 residues long: Acetate kinase (408 aa).

Mg(2+) is bound at residue Asn10. ATP is bound at residue Lys17. Arg96 serves as a coordination point for substrate. Residue Asp153 is the Proton donor/acceptor of the active site. ATP contacts are provided by residues 213 to 217 (HLGNG) and 288 to 290 (DLR). Glu393 serves as a coordination point for Mg(2+).

It belongs to the acetokinase family. As to quaternary structure, homodimer. Requires Mg(2+) as cofactor. Mn(2+) serves as cofactor.

The protein resides in the cytoplasm. It catalyses the reaction acetate + ATP = acetyl phosphate + ADP. The protein operates within metabolic intermediate biosynthesis; acetyl-CoA biosynthesis; acetyl-CoA from acetate: step 1/2. In terms of biological role, catalyzes the formation of acetyl phosphate from acetate and ATP. Can also catalyze the reverse reaction. This chain is Acetate kinase, found in Borrelia recurrentis (strain A1).